The following is a 173-amino-acid chain: Probable xanthine dehydrogenase subunit E (173 aa).

The 77-residue stretch at 14–90 folds into the 2Fe-2S ferredoxin-type domain; that stretch reads EQFRMTVNGQ…GHSITTIEGL (77 aa). [2Fe-2S] cluster contacts are provided by C52, C57, C60, C72, C110, C113, C145, and C147.

In terms of assembly, could be composed of four subunits: PucA, PucC, PucD and PucE. [2Fe-2S] cluster is required as a cofactor.

The enzyme catalyses xanthine + NAD(+) + H2O = urate + NADH + H(+). It carries out the reaction hypoxanthine + NAD(+) + H2O = xanthine + NADH + H(+). Its pathway is purine metabolism; hypoxanthine degradation; urate from hypoxanthine: step 1/2. It participates in purine metabolism; hypoxanthine degradation; urate from hypoxanthine: step 2/2. Oxidizes hypoxanthine and xanthine to uric acid. The polypeptide is Probable xanthine dehydrogenase subunit E (pucE) (Bacillus subtilis (strain 168)).